A 281-amino-acid polypeptide reads, in one-letter code: Insulin-like growth factor-binding protein 2 (281 aa).

An N-terminal signal peptide occupies residues 1–21 (MVLSEHLLVLLGAVLCAPALS). Residues 23–106 (VLFRCPPCSP…VLGLGTCGKR (84 aa)) form the IGFBP N-terminal domain. 6 disulfides stabilise this stretch: C27–C56, C30–C58, C38–C59, C47–C62, C70–C83, and C77–C103. Disordered stretches follow at residues 107–127 (RDAEYGSSQERGTELPEDQSD) and 139–180 (PAVP…RPAR). Over residues 156 to 176 (VNRERANEQHRSKTNKSEDKK) the composition is skewed to basic and acidic residues. A Thyroglobulin type-1 domain is found at 180–262 (RSLCQLQLDQ…SPTVRGDPEC (83 aa)). Disulfide bonds link C183–C217, C228–C239, and C241–C262. The short motif at 257 to 259 (RGD) is the Cell attachment site element.

Interacts with igf1 and igf2.

It is found in the secreted. In terms of biological role, IGF-binding proteins prolong the half-life of the IGFs and have been shown to either inhibit or stimulate the growth promoting effects of the IGFs on cell culture. They alter the interaction of IGFs with their cell surface receptors. This chain is Insulin-like growth factor-binding protein 2 (igfbp2), found in Xenopus laevis (African clawed frog).